The following is a 345-amino-acid chain: Dihydroorotate dehydrogenase (quinone) (345 aa).

FMN contacts are provided by residues 65-69 (AGLDK) and Thr89. Residue Lys69 coordinates substrate. 114–118 (NRMGF) contacts substrate. Residues Asn146 and Asn179 each contribute to the FMN site. Residue Asn179 coordinates substrate. Catalysis depends on Ser182, which acts as the Nucleophile. Position 184 (Asn184) interacts with substrate. Positions 224 and 252 each coordinate FMN. Position 253–254 (253–254 (NT)) interacts with substrate. FMN is bound by residues Gly275, Gly304, and 325–326 (YT).

Belongs to the dihydroorotate dehydrogenase family. Type 2 subfamily. In terms of assembly, monomer. It depends on FMN as a cofactor.

It localises to the cell membrane. It carries out the reaction (S)-dihydroorotate + a quinone = orotate + a quinol. Its pathway is pyrimidine metabolism; UMP biosynthesis via de novo pathway; orotate from (S)-dihydroorotate (quinone route): step 1/1. Catalyzes the conversion of dihydroorotate to orotate with quinone as electron acceptor. In Janthinobacterium sp. (strain Marseille) (Minibacterium massiliensis), this protein is Dihydroorotate dehydrogenase (quinone).